Reading from the N-terminus, the 356-residue chain is Heat-inducible transcription repressor HrcA (356 aa).

This sequence belongs to the HrcA family.

In terms of biological role, negative regulator of class I heat shock genes (grpE-dnaK-dnaJ and groELS operons). Prevents heat-shock induction of these operons. This chain is Heat-inducible transcription repressor HrcA, found in Chlorobaculum parvum (strain DSM 263 / NCIMB 8327) (Chlorobium vibrioforme subsp. thiosulfatophilum).